The primary structure comprises 301 residues: MGISLSPLLTVLSLLSGRWLELGNGQTVNMVQLPGGRFQMGTDSPDGRDGEGPVREVTVKPFAIDIFPVTNKDFREFVREKKYRTEAEVFGWSFVFEDLVSDELRNKATQRMQSLLWWLPVERAFWRQPAGPGSGIREKLEFPVVHVSWNDARAYCAWRGKRLPTEEEWEFAARGGLKGQVYPWGNKFQPNRTNLWQGKFPKGDKAEDGFHGVSPVNAFPPQNDYGLYDLVGNVWEWTASQYQAADQDMRVLRGASWIDTADGSANHRARVTTRMGNTPDSASDNLGFRCASGAGRPPGEL.

A signal peptide spans 1 to 25; that stretch reads MGISLSPLLTVLSLLSGRWLELGNG. Cysteines 156 and 290 form a disulfide. The N-linked (GlcNAc...) asparagine glycan is linked to Asn-191. 8 residues coordinate Ca(2+): Asn-194, Leu-195, Asp-208, Phe-210, Asp-229, Gly-232, Val-234, and Glu-236. Residues 274 to 284 show a composition bias toward polar residues; the sequence is RMGNTPDSASD. The disordered stretch occupies residues 274–301; sequence RMGNTPDSASDNLGFRCASGAGRPPGEL. The Non-canonical ER retention motif signature appears at 298–301; sequence PGEL.

It belongs to the sulfatase-modifying factor family. As to quaternary structure, homodimer and heterodimer with SUMF1.

Its subcellular location is the endoplasmic reticulum lumen. In terms of biological role, lacks formylglycine generating activity and is unable to convert newly synthesized inactive sulfatases to their active form. Inhibits the activation of sulfatases by SUMF1. The chain is Inactive C-alpha-formylglycine-generating enzyme 2 from Bos taurus (Bovine).